The following is a 458-amino-acid chain: Cysteine--tRNA ligase (458 aa).

Position 28 (Cys28) interacts with Zn(2+). The 'HIGH' region signature appears at 30–40; the sequence is VTVYDLCHFGH. Residues Cys209, His234, and Glu238 each coordinate Zn(2+). The 'KMSKS' region signature appears at 266 to 270; the sequence is KMSKS. Lys269 is an ATP binding site.

This sequence belongs to the class-I aminoacyl-tRNA synthetase family. As to quaternary structure, monomer. Zn(2+) is required as a cofactor.

It is found in the cytoplasm. The enzyme catalyses tRNA(Cys) + L-cysteine + ATP = L-cysteinyl-tRNA(Cys) + AMP + diphosphate. This chain is Cysteine--tRNA ligase, found in Mannheimia succiniciproducens (strain KCTC 0769BP / MBEL55E).